Here is a 149-residue protein sequence, read N- to C-terminus: D-aminoacyl-tRNA deacylase (149 aa).

A Gly-cisPro motif, important for rejection of L-amino acids motif is present at residues 137–138 (GP).

This sequence belongs to the DTD family. As to quaternary structure, homodimer.

Its subcellular location is the cytoplasm. It catalyses the reaction glycyl-tRNA(Ala) + H2O = tRNA(Ala) + glycine + H(+). The catalysed reaction is a D-aminoacyl-tRNA + H2O = a tRNA + a D-alpha-amino acid + H(+). Its function is as follows. An aminoacyl-tRNA editing enzyme that deacylates mischarged D-aminoacyl-tRNAs. Also deacylates mischarged glycyl-tRNA(Ala), protecting cells against glycine mischarging by AlaRS. Acts via tRNA-based rather than protein-based catalysis; rejects L-amino acids rather than detecting D-amino acids in the active site. By recycling D-aminoacyl-tRNA to D-amino acids and free tRNA molecules, this enzyme counteracts the toxicity associated with the formation of D-aminoacyl-tRNA entities in vivo and helps enforce protein L-homochirality. This Clostridium botulinum (strain Eklund 17B / Type B) protein is D-aminoacyl-tRNA deacylase.